The primary structure comprises 191 residues: Protein GrpE (191 aa).

The segment covering 1-14 (MEDQKQTPSNQTAT) has biased composition (polar residues). The disordered stretch occupies residues 1-35 (MEDQKQTPSNQTATPAGDEATSTAAASPETGAPDT). Residues 19–35 (EATSTAAASPETGAPDT) are compositionally biased toward low complexity.

This sequence belongs to the GrpE family. As to quaternary structure, homodimer.

Its subcellular location is the cytoplasm. Its function is as follows. Participates actively in the response to hyperosmotic and heat shock by preventing the aggregation of stress-denatured proteins, in association with DnaK and GrpE. It is the nucleotide exchange factor for DnaK and may function as a thermosensor. Unfolded proteins bind initially to DnaJ; upon interaction with the DnaJ-bound protein, DnaK hydrolyzes its bound ATP, resulting in the formation of a stable complex. GrpE releases ADP from DnaK; ATP binding to DnaK triggers the release of the substrate protein, thus completing the reaction cycle. Several rounds of ATP-dependent interactions between DnaJ, DnaK and GrpE are required for fully efficient folding. The protein is Protein GrpE of Cupriavidus taiwanensis (strain DSM 17343 / BCRC 17206 / CCUG 44338 / CIP 107171 / LMG 19424 / R1) (Ralstonia taiwanensis (strain LMG 19424)).